The sequence spans 401 residues: Multidrug resistance protein MdtH (401 aa).

The next 11 membrane-spanning stretches (helical) occupy residues 13 to 33 (YFLL…FPLI), 34 to 54 (SIHF…ALGL), 78 to 95 (MIVT…FIAL), 99 to 116 (PWIL…GTLF), 139 to 159 (LLLM…SWLL), 165 to 185 (FVCW…ALFL), 214 to 234 (VLTL…FPII), 243 to 263 (AAVK…LYPI), 289 to 309 (FPVG…LFYL), 340 to 360 (LGLA…YDTG), and 365 to 385 (IPQL…YALH).

Belongs to the major facilitator superfamily. DHA1 family. MdtH (TC 2.A.1.2.21) subfamily.

It is found in the cell inner membrane. The protein is Multidrug resistance protein MdtH of Photorhabdus laumondii subsp. laumondii (strain DSM 15139 / CIP 105565 / TT01) (Photorhabdus luminescens subsp. laumondii).